Consider the following 173-residue polypeptide: MPRSQRNDNFIDKTFTVIADLILKILPVSKKTKEAFAYYRDGMSAQSEGAYAEALENYYEALRLEEDPYDKSYTFYNIALIHTSNGDQTKALEYYRQALDLNPKMPQALNNMAVIYHAQGEQAAEQGDMEMAEALFDQAAFYWKQAIRLAPDNYIEAQNWLKTTGRSKLDILI.

TPR repeat units lie at residues 35 to 68 (AFAY…EEDP), 72 to 105 (SYTF…NPKM), and 120 to 153 (GEQA…APDN).

Belongs to the Ycf3 family.

The protein resides in the plastid. Its subcellular location is the cyanelle thylakoid membrane. In terms of biological role, essential for the assembly of the photosystem I (PSI) complex. May act as a chaperone-like factor to guide the assembly of the PSI subunits. This chain is Photosystem I assembly protein Ycf3, found in Cyanophora paradoxa.